Reading from the N-terminus, the 325-residue chain is Glutarate 2-hydroxylase (325 aa).

Positions 160, 162, and 292 each coordinate Fe cation.

This sequence belongs to the glutarate hydroxylase family. Homotetramer. It depends on Fe(2+) as a cofactor.

The enzyme catalyses glutarate + 2-oxoglutarate + O2 = (S)-2-hydroxyglutarate + succinate + CO2. The protein operates within amino-acid degradation. In terms of biological role, acts as an alpha-ketoglutarate-dependent dioxygenase catalyzing hydroxylation of glutarate (GA) to L-2-hydroxyglutarate (L2HG). Functions in a L-lysine degradation pathway that proceeds via cadaverine, glutarate and L-2-hydroxyglutarate. Is extremely specific for glutarate, but it can use both 2-oxoglutarate and 2-oxoadipate (2OA) as a cosubstrate for L2HG formation. The sequence is that of Glutarate 2-hydroxylase from Pseudomonas putida (strain ATCC 47054 / DSM 6125 / CFBP 8728 / NCIMB 11950 / KT2440).